A 341-amino-acid chain; its full sequence is Fe-S cluster assembly protein DRE2 (341 aa).

An N-terminal SAM-like domain region spans residues Met1–Leu157. The tract at residues Leu151–Leu171 is disordered. The interval Leu157 to Ala204 is linker. A compositionally biased stretch (acidic residues) spans Ser161 to Gln170. 4 residues coordinate [2Fe-2S] cluster: Cys215, Cys227, Cys230, and Cys232. The segment at Cys215–Cys232 is fe-S binding site A. Positions 304, 307, 315, and 318 each coordinate [4Fe-4S] cluster. 2 consecutive short sequence motifs (cx2C motif) follow at residues Cys304–Cys307 and Cys315–Cys318. The tract at residues Cys304–Cys318 is fe-S binding site B.

The protein belongs to the anamorsin family. In terms of assembly, monomer. Interacts with TAH18. Interacts with MIA40. [2Fe-2S] cluster serves as cofactor. [4Fe-4S] cluster is required as a cofactor.

It is found in the cytoplasm. It localises to the mitochondrion intermembrane space. Component of the cytosolic iron-sulfur (Fe-S) protein assembly (CIA) machinery required for the maturation of extramitochondrial Fe-S proteins. Part of an electron transfer chain functioning in an early step of cytosolic Fe-S biogenesis, facilitating the de novo assembly of a [4Fe-4S] cluster on the scaffold complex CFD1-NBP35. Electrons are transferred to DRE2 from NADPH via the FAD- and FMN-containing protein TAH18. TAH18-DRE2 are also required for the assembly of the diferric tyrosyl radical cofactor of ribonucleotide reductase (RNR), probably by providing electrons for reduction during radical cofactor maturation in the catalytic small subunit RNR2. This chain is Fe-S cluster assembly protein DRE2, found in Komagataella phaffii (strain GS115 / ATCC 20864) (Yeast).